The primary structure comprises 243 residues: Juxtaposed with another zinc finger protein 1 (243 aa).

Residues 12-37 form a C2H2-type 1 zinc finger; that stretch reads NTCRFGGCGLHFPTLADLIEHIEDNH. Residues 39–79 form a required for interaction with NR2C2 region; that stretch reads DTDPRVLEKQELQQPTYVALSYINRFMTDAARREQESLKKK. A compositionally biased stretch (polar residues) spans 89 to 108; that stretch reads SSSVSRGNVSTPPRHSSGSL. Residues 89-151 are disordered; sequence SSSVSRGNVS…SDSDESWTTE (63 aa). Phosphothreonine is present on residues Thr-109 and Thr-113. A compositionally biased stretch (low complexity) spans 118–130; that stretch reads PSSSFRSSTPTGS. Positions 131–148 are enriched in acidic residues; it reads EYDEEEVDYEESDSDESW. A C2H2-type 2 zinc finger spans residues 173–198; it reads FACPVPGCKKRYKNVNGIKYHAKNGH. A C2H2-type 3; degenerate zinc finger spans residues 208-230; the sequence is FKCRCGKSYKTAQGLRHHTINFH.

Interacts with NR2C2 (via ligand-binding region). As to expression, expressed in range of tissues with highest expression levels in testis, liver, muscle and fat and lowest levels in kidney. Detected in liver and white adipose tissue (at protein level).

Its subcellular location is the nucleus. Acts as a transcriptional corepressor of orphan nuclear receptor NR2C2. Inhibits expression of the gluconeogenesis enzyme PCK2 through inhibition of NR2C2 activity. Also involved in transcriptional activation of NAMPT by promoting expression of PPARA and PPARD. Plays a role in lipid metabolism by suppressing lipogenesis, increasing lipolysis and decreasing lipid accumulation in adipose tissue. Plays a role in glucose homeostasis by improving glucose metabolism and insulin sensitivity. This Mus musculus (Mouse) protein is Juxtaposed with another zinc finger protein 1 (Jazf1).